The primary structure comprises 57 residues: Metallothionein (57 aa).

It belongs to the metallothionein superfamily. Type 14 family.

In terms of biological role, this protein complexes cadmium, zinc and copper. The protein is Metallothionein (mtnA) of Thermostichus vulcanus (Synechococcus vulcanus).